A 392-amino-acid chain; its full sequence is Protein O-glucosyltransferase 1 (392 aa).

An N-terminal signal peptide occupies residues 1–23 (MELGVSSQLWLWLLLLLLPPVPG). Disulfide bonds link Cys-49–Cys-56, Cys-54–Cys-357, Cys-102–Cys-108, and Cys-263–Cys-286. N-linked (GlcNAc...) asparagine glycosylation occurs at Asn-53. The segment at 103–107 (MFPSR) is interaction with the consensus sequence C-X-S-X-[PA]-C in peptide substrates. Asp-133 functions as the Proton donor/acceptor in the catalytic mechanism. The interval 172–178 (AVWPIYP) is interaction with the consensus sequence C-X-S-X-[PA]-C in peptide substrates. Tyr-177 is a binding site for UDP-alpha-D-glucose. Asn-204 is a glycosylation site (N-linked (GlcNAc...) asparagine). Residues Ser-212, Arg-218, and 274-279 (VAASFR) contribute to the UDP-alpha-D-glucose site. Asn-373 carries N-linked (GlcNAc...) asparagine glycosylation. A Prevents secretion from ER motif is present at residues 389-392 (KIEL).

It belongs to the glycosyltransferase 90 family.

The protein localises to the endoplasmic reticulum lumen. The enzyme catalyses L-seryl-[EGF-like domain protein] + UDP-alpha-D-xylose = 3-O-(beta-D-xylosyl)-L-seryl-[EGF-like domain protein] + UDP + H(+). It catalyses the reaction L-seryl-[EGF-like domain protein] + UDP-alpha-D-glucose = 3-O-(beta-D-glucosyl)-L-seryl-[EGF-like domain protein] + UDP + H(+). It functions in the pathway protein modification; protein glycosylation. Its function is as follows. Dual specificity glycosyltransferase that catalyzes the transfer of glucose and xylose from UDP-glucose and UDP-xylose, respectively, to a serine residue found in the consensus sequence of C-X-S-X-P-C. Specifically targets extracellular EGF repeats of protein such as CRB2, F7, F9 and NOTCH2. Acts as a positive regulator of Notch signaling by mediating O-glucosylation of Notch, leading to regulate muscle development. Notch glucosylation does not affect Notch ligand binding. Required during early development to promote gastrulation: acts by mediating O-glucosylation of CRB2, which is required for CRB2 localization to the cell membrane. The polypeptide is Protein O-glucosyltransferase 1 (POGLUT1) (Bos taurus (Bovine)).